The primary structure comprises 611 residues: Putative clathrin assembly protein At4g02650 (611 aa).

The region spanning 26 to 162 is the ENTH domain; it reads GRSSSLTELE…DYRMQGRRGK (137 aa). Disordered regions lie at residues 158 to 184 and 337 to 406; these read GRRGKKKSGGGGGGDGDSGEEDDHRGT and TTKS…GDLL. The segment covering 386–401 has biased composition (basic and acidic residues); that stretch reads METKKDVEEVVSRQDQ.

The protein resides in the membrane. It is found in the clathrin-coated pit. Its subcellular location is the golgi apparatus. The protein localises to the cytoplasmic vesicle. It localises to the clathrin-coated vesicle. This Arabidopsis thaliana (Mouse-ear cress) protein is Putative clathrin assembly protein At4g02650.